Consider the following 229-residue polypeptide: Aquaporin Z (229 aa).

The next 2 helical transmembrane spans lie at 8–28 and 33–53; these read FFGTFWLVLGGCGSAVLAAGV and IGYLGVALAFGLSVLTMAYAI. The NPA 1 motif lies at 62 to 64; sequence NPA. 3 consecutive transmembrane segments (helical) span residues 81–101, 131–151, and 158–178; these read LPYVVAQVLGGLAAGGVLYLI, AALVSEVVLTGMFLLIILGAT, and GFAPIAIGLTLTLIHLISIPV. Positions 184–186 match the NPA 2 motif; the sequence is NPA. Residues 199–219 form a helical membrane-spanning segment; it reads AVSQLWLFWVAPILGAVLGAL.

This sequence belongs to the MIP/aquaporin (TC 1.A.8) family. Homotetramer.

It is found in the cell inner membrane. The catalysed reaction is H2O(in) = H2O(out). In terms of biological role, channel that permits osmotically driven movement of water in both directions. It is involved in the osmoregulation and in the maintenance of cell turgor during volume expansion in rapidly growing cells. It mediates rapid entry or exit of water in response to abrupt changes in osmolarity. The chain is Aquaporin Z from Pseudomonas aeruginosa (strain ATCC 15692 / DSM 22644 / CIP 104116 / JCM 14847 / LMG 12228 / 1C / PRS 101 / PAO1).